Consider the following 477-residue polypeptide: MVDTEMPFWSNLNFGMNSMDMSALEDHCQPYDIKPFTTVDFSSINSHYDDILDEKTFLCRNDQSPIDYKYDLKLQECQSSIKLEPPSPPYFSDKPQCSKAFEDTPNSFIAIECRVCGDKASGFHYGVHACEGCKGFFRRTIRLKLIYERCDLNCRIHKKSRNKCQFCRFQKCLAVGMSHNAIRFGRMPQAEKEKLLAEISSDIDQLNPESADQRVLAKHLYDSYVKSFPLTKAKAPGHPDGQSHRQNSRGYTRHELADDGGGSDQGAVREPRAEQGGGDSNLPALSVALRGGVREITEFAKNIPGFVSLDLNDQVTLLKYGVHEIIFTMLASLMNKDGVLVAEGQGFMTREFLKSLRKPFSDFMEPKFEFAIRFNSLELDDSDLAIFVAVIILSGDRPGLLNVKPIEDIQDSLLQALELQLKLNHPDSAQLFAKLLQKMTDLRQVVTEHVQLLQLIKKTEADMCLHPLLQEIYKDLY.

Ser-87 is modified (phosphoserine; by MAPK). A DNA-binding region (nuclear receptor) is located at residues 110-184; that stretch reads AIECRVCGDK…VGMSHNAIRF (75 aa). 2 NR C4-type zinc fingers span residues 113-133 and 150-172; these read CRVCGDKASGFHYGVHACEGC and CDLNCRIHKKSRNKCQFCRFQKC. The segment at 231–281 is disordered; it reads TKAKAPGHPDGQSHRQNSRGYTRHELADDGGGSDQGAVREPRAEQGGGDSN. The NR LBD domain occupies 252–475; it reads TRHELADDGG…HPLLQEIYKD (224 aa). The 9aaTAD signature appears at 467–475; sequence PLLQEIYKD.

The protein belongs to the nuclear hormone receptor family. NR1 subfamily. As to quaternary structure, heterodimer with the retinoid X receptor. Expressed mainly in adipose tissue and kidney.

The protein resides in the nucleus. Its subcellular location is the cytoplasm. Its function is as follows. Receptor that binds peroxisome proliferators such as hypolipidemic drugs and fatty acids. Once activated by a ligand, the receptor binds to a promoter element in the gene for acyl-CoA oxidase and activates its transcription. It therefore controls the peroxisomal beta-oxidation pathway of fatty acids. Key regulator of adipocyte differentiation and glucose homeostasis. May play a role in the regulation of circadian rhythm. This is Peroxisome proliferator-activated receptor gamma (pparg) from Xenopus laevis (African clawed frog).